A 456-amino-acid chain; its full sequence is GPI-anchored protein 13 (456 aa).

The first 23 residues, 1–23 (MRSPSLAVAATTVLGLFSSSALA), serve as a signal peptide directing secretion. N-linked (GlcNAc...) asparagine glycosylation is present at Asn-27. Gly-433 carries the GPI-anchor amidated glycine lipid modification. The propeptide at 434-456 (AAAVNVVPTTAFGLFAIILASIF) is removed in mature form.

Post-translationally, the GPI-anchor is attached to the protein in the endoplasmic reticulum and serves to target the protein to the cell surface. There, the glucosamine-inositol phospholipid moiety is cleaved off and the GPI-modified mannoprotein is covalently attached via its lipidless GPI glycan remnant to the 1,6-beta-glucan of the outer cell wall layer.

The protein localises to the secreted. It localises to the cell wall. The protein resides in the membrane. Its function is as follows. Cell wall protein which contributes to cell wall synthesis and is important for acquiring normal surface properties. Required for virulence in a mouse infection model. In Candida albicans (strain SC5314 / ATCC MYA-2876) (Yeast), this protein is GPI-anchored protein 13 (PGA13).